The sequence spans 148 residues: Large ribosomal subunit protein bL9 (148 aa).

Belongs to the bacterial ribosomal protein bL9 family.

Binds to the 23S rRNA. The chain is Large ribosomal subunit protein bL9 from Clostridium perfringens (strain ATCC 13124 / DSM 756 / JCM 1290 / NCIMB 6125 / NCTC 8237 / Type A).